The chain runs to 99 residues: Nucleoid-associated protein EbfC (99 aa).

The protein belongs to the YbaB/EbfC family. In terms of assembly, homodimer.

It is found in the cytoplasm. The protein localises to the nucleoid. Functionally, binds to DNA and alters its conformation. May be involved in regulation of gene expression, nucleoid organization and DNA protection. This chain is Nucleoid-associated protein EbfC, found in Borrelia hermsii (strain HS1 / DAH).